Consider the following 377-residue polypeptide: Transcription initiation factor IIA subunit 1 (377 aa).

Alanine 2 bears the N-acetylalanine mark. Composition is skewed to low complexity over residues 69 to 79 (QVQQQHQPQQQ), 89 to 105 (QAQPQQTVPQQAQTQQV), and 248 to 280 (QAQIPAAGQQQPQAQPAQQQAPLVLQVDGTGDT). Disordered stretches follow at residues 69 to 107 (QVQQQHQPQQQQHHHHHHHQQAQPQQTVPQQAQTQQVLI) and 248 to 330 (QAQI…QELF). 2 positions are modified to phosphoserine; by TAF1: serine 281 and serine 282. Over residues 281–330 (SSEEDEDEEEDYDDDEEEDKEKDGAEDGQVEEEPLNSEDDVSDEEGQELF) the composition is skewed to acidic residues. Residues serine 317 and serine 322 each carry the phosphoserine modification. The DNA site is built by histidine 344 and arginine 345.

It belongs to the TFIIA subunit 1 family. TFIIA is a heterodimer of the large unprocessed subunit 1 and a small subunit gamma. It was originally believed to be a heterotrimer of an alpha (p35), a beta (p19) and a gamma subunit (p12). TFIIA forms a complex with TBP. Part of TBP-based Pol II pre-initiation complex (PIC), in which Pol II core assembles with general transcription factors and other specific initiation factors including GTF2E1, GTF2E2, GTF2F1, GTF2F2, TCEA1, ERCC2, ERCC3, GTF2H2, GTF2H3, GTF2H4, GTF2H5, GTF2A1, GTF2A2, GTF2B and TBP; this large multi-subunit PIC complex mediates DNA unwinding and targets Pol II core to the transcription start site where the first phosphodiester bond forms. The alpha and beta subunits are postranslationally produced from the precursor formby TASP1. The cleavage promotes proteasomal degradation.

The protein localises to the nucleus. In terms of biological role, TFIIA is a component of the transcription machinery of RNA polymerase II and plays an important role in transcriptional activation. TFIIA in a complex with TBP mediates transcriptional activity. In Rattus norvegicus (Rat), this protein is Transcription initiation factor IIA subunit 1 (Gtf2a1).